We begin with the raw amino-acid sequence, 90 residues long: MTISRTEQRVLHVLALGGRILHERGEGPKITTITCVTRDGLILADCDLAVFSRLRRRRLIESRAGGPYRLSPLGRAMVRPQSDNQGHITC.

It belongs to the UPF0386 family.

The protein is UPF0386 protein Rru_A2144 of Rhodospirillum rubrum (strain ATCC 11170 / ATH 1.1.1 / DSM 467 / LMG 4362 / NCIMB 8255 / S1).